We begin with the raw amino-acid sequence, 244 residues long: Aspartate/glutamate leucyltransferase (244 aa).

It belongs to the R-transferase family. Bpt subfamily.

The protein resides in the cytoplasm. It catalyses the reaction N-terminal L-glutamyl-[protein] + L-leucyl-tRNA(Leu) = N-terminal L-leucyl-L-glutamyl-[protein] + tRNA(Leu) + H(+). The enzyme catalyses N-terminal L-aspartyl-[protein] + L-leucyl-tRNA(Leu) = N-terminal L-leucyl-L-aspartyl-[protein] + tRNA(Leu) + H(+). Functions in the N-end rule pathway of protein degradation where it conjugates Leu from its aminoacyl-tRNA to the N-termini of proteins containing an N-terminal aspartate or glutamate. The chain is Aspartate/glutamate leucyltransferase from Bordetella parapertussis (strain 12822 / ATCC BAA-587 / NCTC 13253).